The primary structure comprises 486 residues: dTDP-4-dehydro-6-deoxy-alpha-D-glucopyranose 2,3-dehydratase (486 aa).

DTDP-4-dehydro-6-deoxy-alpha-D-glucose-binding positions include Trp66, 149 to 153 (TRSNY), Ser187, Trp304, Arg367, 383 to 385 (QCS), 388 to 389 (NY), and 421 to 424 (EGGR).

This sequence belongs to the hexose 2,3-dehydratase family. In terms of assembly, homodimer.

It catalyses the reaction dTDP-4-dehydro-6-deoxy-alpha-D-glucose = dTDP-3,4-didehydro-2,6-dideoxy-alpha-D-glucose + H2O. Involved in the biosynthesis of forosamine ((4-dimethylamino)-2,3,4,6-tetradeoxy-alpha-D-threo-hexopyranose), a highly deoxygenated sugar component of several bioactive natural products such as the insecticidal spinosyns A and D. Catalyzes the removal of the hydroxyl group at position C-2 of the hexose ring of dTDP-4-dehydro-6-deoxy-alpha-D-glucopyranose, and the oxidation of the hydroxyl group at position C-3 to form a carbonyl functionality. The product of the reaction, dTDP-2,6-dideoxy-D-glycero-hex-2-enos-4-ulose, is a highly unstable diketosugar, which spontaneously forms dTDP-3,4-didehydro-2,6-dideoxy-alpha-D-glucose. In Saccharopolyspora spinosa, this protein is dTDP-4-dehydro-6-deoxy-alpha-D-glucopyranose 2,3-dehydratase.